Here is a 1161-residue protein sequence, read N- to C-terminus: Perforin-like protein 1 (1161 aa).

Residues 67–86 traverse the membrane as a helical segment; the sequence is LWITFVCLLTLHMFGLSSAV. The segment at 154–329 is disordered; the sequence is PEALNEVPTK…LGDSSALDLF (176 aa). 2 stretches are compositionally biased toward basic and acidic residues: residues 162–177 and 184–194; these read TKVE…DKTE and ADHKSLLEGRS. The span at 201–211 shows a compositional bias: acidic residues; sequence PDDDFDFLFED. Residues 222–234 are compositionally biased toward polar residues; sequence NKGTSSDETSPGD. Positions 238 to 249 are enriched in low complexity; it reads GEGSSASDSLLS. Asn257 is a glycosylation site (N-linked (GlcNAc...) asparagine). Over residues 264–283 the composition is skewed to basic residues; that stretch reads NQKRITHPKSKAQHQKKVTK. The span at 309–322 shows a compositional bias: polar residues; the sequence is NTQADDSQRQSLGD. The N-linked (GlcNAc...) asparagine glycan is linked to Asn344. The disordered stretch occupies residues 353-381; that stretch reads AANDGGLFSSSGMGPTGASDETSANPLGS. Positions 361–378 are enriched in polar residues; it reads SSSGMGPTGASDETSANP. One can recognise an MACPF domain in the interval 463–817; that stretch reads LSAVYTKATK…LTPQDLSALT (355 aa). The cysteines at positions 539 and 602 are disulfide-linked. N-linked (GlcNAc...) asparagine glycosylation is present at Asn550. A beta stranded transmembrane segment spans residues 554–589; it reads YQNELSVDASLQGGDPIGLNSFSASTGYRDFAKEVS. Asn618 carries N-linked (GlcNAc...) asparagine glycosylation. A disulfide bridge links Cys643 with Cys657. The chain crosses the membrane as a beta stranded span at residues 694 to 740; the sequence is RSEVEKMRNMGIDVKTQLKMQLGGVSGGAGQGTSSKKNQSSSEYQMN. The segment at 716 to 736 is disordered; the sequence is GGVSGGAGQGTSSKKNQSSSE. An N-linked (GlcNAc...) asparagine glycan is attached at Asn755. 6 disulfides stabilise this stretch: Cys845-Cys900, Cys874-Cys881, Cys928-Cys981, Cys957-Cys964, Cys1019-Cys1080, and Cys1047-Cys1054. N-linked (GlcNAc...) asparagine glycans are attached at residues Asn1022, Asn1050, and Asn1111. Residues 1094–1149 form a disordered region; the sequence is VGKAKGNGKKKKGKKGKNKTNAPNEVEEGQQLGADSPSQVSVPADADSGPTSKTMS. Residues 1099-1111 are compositionally biased toward basic residues; the sequence is GNGKKKKGKKGKN.

It belongs to the MPEG1 family. As to quaternary structure, homooligomer; forms a homooligomeric pore.

The protein resides in the parasitophorous vacuole membrane. The protein localises to the cytoplasmic vesicle. Its subcellular location is the secretory vesicle. It is found in the microneme membrane. Functionally, pore-forming protein that promotes parasite exit from host cells: mediates formation of a pore in the parasitophorous vacuolar membrane, leading to membrane permeabilization, thereby facilitating parasite egress from host cells. May also form a pore in the host plasma membrane. Preferentially binds inner leaflet lipids, such as phosphatidylethanolamine (PE) or phosphatidylserine (PS). The protein is Perforin-like protein 1 of Toxoplasma gondii (strain ATCC 50861 / VEG).